The chain runs to 574 residues: R-linalool synthase, chloroplastic (574 aa).

Residues 1-40 (MSCARITVTLPYRSAKTSIQRGITHCPALLRPRFSACTPL) constitute a chloroplast transit peptide. Residues 52–61 (INGDNSPLKN) are compositionally biased toward polar residues. Positions 52 to 71 (INGDNSPLKNTHQHVEERSS) are disordered. (2E)-geranyl diphosphate-binding residues include Arg-287, Asp-324, Asp-328, Arg-467, and Asp-470. Residues Asp-324 and Asp-328 each coordinate Mg(2+). Positions 324-328 (DDIFD) match the DDXXD motif motif. Residues Asp-470, Thr-474, and Glu-478 each contribute to the Mg(2+) site.

Belongs to the terpene synthase family. Tpsb subfamily. It depends on Mg(2+) as a cofactor. Mn(2+) serves as cofactor.

The protein localises to the plastid. Its subcellular location is the chloroplast. It catalyses the reaction (2E)-geranyl diphosphate + H2O = (R)-linalool + diphosphate. It functions in the pathway secondary metabolite biosynthesis; terpenoid biosynthesis. Functionally, monoterpene synthase that catalyzes the formation of (3R)-linalool from geranyl diphosphate. The chain is R-linalool synthase, chloroplastic (LIS) from Ocimum basilicum (Sweet basil).